The following is a 411-amino-acid chain: Serine--tRNA ligase (411 aa).

226–228 (TSE) is an L-serine binding site. An ATP-binding site is contributed by 257 to 259 (RKE). Glu280 contacts L-serine. Residue 344–347 (EISS) participates in ATP binding. Residue Ser379 coordinates L-serine.

This sequence belongs to the class-II aminoacyl-tRNA synthetase family. Type-1 seryl-tRNA synthetase subfamily. In terms of assembly, homodimer. The tRNA molecule binds across the dimer.

The protein resides in the cytoplasm. The catalysed reaction is tRNA(Ser) + L-serine + ATP = L-seryl-tRNA(Ser) + AMP + diphosphate + H(+). The enzyme catalyses tRNA(Sec) + L-serine + ATP = L-seryl-tRNA(Sec) + AMP + diphosphate + H(+). Its pathway is aminoacyl-tRNA biosynthesis; selenocysteinyl-tRNA(Sec) biosynthesis; L-seryl-tRNA(Sec) from L-serine and tRNA(Sec): step 1/1. Catalyzes the attachment of serine to tRNA(Ser). Is also able to aminoacylate tRNA(Sec) with serine, to form the misacylated tRNA L-seryl-tRNA(Sec), which will be further converted into selenocysteinyl-tRNA(Sec). The sequence is that of Serine--tRNA ligase from Campylobacter jejuni subsp. jejuni serotype O:2 (strain ATCC 700819 / NCTC 11168).